Consider the following 327-residue polypeptide: MTHTLRVIFAGTPEFAAAALAAIHEAGFPVPLVLTQPDRPAGRGMKLQASAVKRYAVEHGMPVAQPPSLRRAGKYPAEAADAIELLRTTPHDVMVVAAYGLLLPQEVLDIPRAGCINIHASLLPRWRGAAPIHRAIEAGDAETGVTLMQMDVGLDTGAMIDEARVAIAPDDTTATLHDRLAADGARLIVDALVRLERDGALPATPQPADGVTYAEKIGKHEAALDWRKPADVLARQVRAFDPFPGGVATLDGAAIKLWAAEPVAARGDAAPGTIVDAAPEGVIVACGSGALRVTQLQKPGGKRLPAREFLAGSPLAAGQRFALPDGA.

Residue 121-124 (SLLP) participates in (6S)-5,6,7,8-tetrahydrofolate binding.

This sequence belongs to the Fmt family.

It catalyses the reaction L-methionyl-tRNA(fMet) + (6R)-10-formyltetrahydrofolate = N-formyl-L-methionyl-tRNA(fMet) + (6S)-5,6,7,8-tetrahydrofolate + H(+). Attaches a formyl group to the free amino group of methionyl-tRNA(fMet). The formyl group appears to play a dual role in the initiator identity of N-formylmethionyl-tRNA by promoting its recognition by IF2 and preventing the misappropriation of this tRNA by the elongation apparatus. This chain is Methionyl-tRNA formyltransferase, found in Burkholderia ambifaria (strain ATCC BAA-244 / DSM 16087 / CCUG 44356 / LMG 19182 / AMMD) (Burkholderia cepacia (strain AMMD)).